The following is a 166-amino-acid chain: CDP-archaeol synthase (166 aa).

Helical transmembrane passes span 42–62 (LVLG…VQDA), 73–93 (VLSV…KSFV), 103–123 (AAWP…LLLI), and 128–148 (FAAV…TPLL).

Belongs to the CDP-archaeol synthase family. Requires Mg(2+) as cofactor.

Its subcellular location is the cell membrane. It carries out the reaction 2,3-bis-O-(geranylgeranyl)-sn-glycerol 1-phosphate + CTP + H(+) = CDP-2,3-bis-O-(geranylgeranyl)-sn-glycerol + diphosphate. Its pathway is membrane lipid metabolism; glycerophospholipid metabolism. Catalyzes the formation of CDP-2,3-bis-(O-geranylgeranyl)-sn-glycerol (CDP-archaeol) from 2,3-bis-(O-geranylgeranyl)-sn-glycerol 1-phosphate (DGGGP) and CTP. This reaction is the third ether-bond-formation step in the biosynthesis of archaeal membrane lipids. The polypeptide is CDP-archaeol synthase (Methanosphaerula palustris (strain ATCC BAA-1556 / DSM 19958 / E1-9c)).